A 258-amino-acid chain; its full sequence is Spindlin-2B (258 aa).

Residues 1-23 are compositionally biased toward low complexity; sequence MKTPNAQEAEGQQTRAAAGRATG. The disordered stretch occupies residues 1-49; sequence MKTPNAQEAEGQQTRAAAGRATGSANMTKKKVSQKKQRGRPSSQPRRNI. The span at 28–39 shows a compositional bias: basic residues; that stretch reads TKKKVSQKKQRG. Tudor-like domain regions lie at residues 50-99, 129-178, and 210-255; these read VGCR…LELH, IGKA…YQLL, and IGKH…YDLV. 2 histone H3K4me3 and H3R8me2a binding regions span residues Glu-138 and 246 to 248; that span reads DFH.

This sequence belongs to the SPIN/STSY family. Interacts with C11orf84/SPINDOC. In terms of tissue distribution, detected in all the examined tissues with highest expression in liver, followed by heart, stomach, kidney, skeletal muscle, placenta, and pancreas.

It localises to the nucleus. Functionally, involved in the regulation of cell cycle progression, this activity is related to the inhibition of apoptosis following the removal of essential growth factors. Exhibits H3K4me3-binding activity. This Homo sapiens (Human) protein is Spindlin-2B (SPIN2B).